We begin with the raw amino-acid sequence, 185 residues long: Ribosome-recycling factor (185 aa).

It belongs to the RRF family.

Its subcellular location is the cytoplasm. Responsible for the release of ribosomes from messenger RNA at the termination of protein biosynthesis. May increase the efficiency of translation by recycling ribosomes from one round of translation to another. The sequence is that of Ribosome-recycling factor from Streptococcus thermophilus (strain ATCC BAA-491 / LMD-9).